We begin with the raw amino-acid sequence, 336 residues long: Dihydroorotate dehydrogenase (quinone) (336 aa).

FMN-binding positions include 62–66 and Thr-86; that span reads AGLDK. Lys-66 is a binding site for substrate. Residue 111–115 coordinates substrate; it reads NRMGF. FMN contacts are provided by Asn-139 and Asn-172. A substrate-binding site is contributed by Asn-172. Ser-175 (nucleophile) is an active-site residue. A substrate-binding site is contributed by Asn-177. Lys-217 and Thr-245 together coordinate FMN. 246 to 247 is a substrate binding site; sequence NT. Residues Gly-268, Gly-297, and 318–319 contribute to the FMN site; that span reads YS.

Belongs to the dihydroorotate dehydrogenase family. Type 2 subfamily. In terms of assembly, monomer. Requires FMN as cofactor.

It localises to the cell membrane. The catalysed reaction is (S)-dihydroorotate + a quinone = orotate + a quinol. Its pathway is pyrimidine metabolism; UMP biosynthesis via de novo pathway; orotate from (S)-dihydroorotate (quinone route): step 1/1. Functionally, catalyzes the conversion of dihydroorotate to orotate with quinone as electron acceptor. In Pectobacterium atrosepticum (strain SCRI 1043 / ATCC BAA-672) (Erwinia carotovora subsp. atroseptica), this protein is Dihydroorotate dehydrogenase (quinone).